The primary structure comprises 286 residues: Shikimate dehydrogenase (NADP(+)) (286 aa).

Residues 20-22 and threonine 65 each bind shikimate; that span reads SLS. Lysine 69 serves as the catalytic Proton acceptor. NADP(+) is bound at residue aspartate 81. 2 residues coordinate shikimate: asparagine 90 and aspartate 105. NADP(+) is bound by residues 128–132 and threonine 217; that span reads GAGGA. Tyrosine 219 lines the shikimate pocket. Glycine 240 contacts NADP(+).

Belongs to the shikimate dehydrogenase family. In terms of assembly, homodimer.

It catalyses the reaction shikimate + NADP(+) = 3-dehydroshikimate + NADPH + H(+). The protein operates within metabolic intermediate biosynthesis; chorismate biosynthesis; chorismate from D-erythrose 4-phosphate and phosphoenolpyruvate: step 4/7. Its function is as follows. Involved in the biosynthesis of the chorismate, which leads to the biosynthesis of aromatic amino acids. Catalyzes the reversible NADPH linked reduction of 3-dehydroshikimate (DHSA) to yield shikimate (SA). The polypeptide is Shikimate dehydrogenase (NADP(+)) (Syntrophobacter fumaroxidans (strain DSM 10017 / MPOB)).